A 242-amino-acid chain; its full sequence is Terpene cyclase cle7 (242 aa).

Helical transmembrane passes span 20 to 40 (LLLT…ITTI), 50 to 69 (GVSL…FAIL), 79 to 101 (VILR…FARS), 117 to 137 (LFVL…SVLL), 143 to 163 (FYWS…GILV), 172 to 192 (SYGM…SLFL), and 207 to 227 (ILMR…GVCF).

The protein belongs to the paxB family.

The protein localises to the membrane. It functions in the pathway secondary metabolite biosynthesis; terpenoid biosynthesis. Its function is as follows. Non-reducing polyketide synthase; part of the cluster A that mediates the biosynthesis of chevalone E and its oxidized derivatives that possess a unique five-membered lactone ring and can synergistically enhance the cytotoxicity of doxorubicin (DOX) in breast cancer cells. Within the pathway, cle7 takes part to the biosynthesis of the molecular scaffold by catalyzing the cyclization of the prenyl group initiated by protonation and ring-opening of the epoxide to produce the chevalone E intermediate. The molecular scaffold is commonly biosynthesized by a series of enzymes including the non-reducing polyketide synthase (NR-PKS) cle1 that produces the alpha-pyrone triacetic acid lactone (TAL); The membrane-bound prenyltransferase cle5 that accepts TAL as its substrate to perform a C-3 geranylgeranylation reaction, in which the pathway-dedicated GGPS cle6 is required to provide GGPP, the other substrate of cle5; the FAD-dependent monooxygenase Cle3 that forms an (S)-epoxide ring at the terminal olefin of the geranylgeranyl group; and the terpene cyclase Cle7 that catalyzes the cyclization of the prenyl group that yields the pentacyclic pathway intermediate chevalone E. Chevalone E can derivatize into seven new oxidized analogs by the cytochrome P450 monooxygenases cle2 (acting at C-20) and cle4 (acting at C-11 and C-12). In Aspergillus versicolor, this protein is Terpene cyclase cle7.